We begin with the raw amino-acid sequence, 613 residues long: Dihydroxy-acid dehydratase (613 aa).

Residue Asp-81 coordinates Mg(2+). Cys-122 lines the [2Fe-2S] cluster pocket. Mg(2+) contacts are provided by Asp-123 and Lys-124. Lys-124 is modified (N6-carboxylysine). Residue Cys-195 participates in [2Fe-2S] cluster binding. Mg(2+) is bound at residue Glu-491. Residue Ser-517 is the Proton acceptor of the active site.

The protein belongs to the IlvD/Edd family. Homodimer. [2Fe-2S] cluster is required as a cofactor. Mg(2+) serves as cofactor.

The catalysed reaction is (2R)-2,3-dihydroxy-3-methylbutanoate = 3-methyl-2-oxobutanoate + H2O. The enzyme catalyses (2R,3R)-2,3-dihydroxy-3-methylpentanoate = (S)-3-methyl-2-oxopentanoate + H2O. Its pathway is amino-acid biosynthesis; L-isoleucine biosynthesis; L-isoleucine from 2-oxobutanoate: step 3/4. It participates in amino-acid biosynthesis; L-valine biosynthesis; L-valine from pyruvate: step 3/4. Functions in the biosynthesis of branched-chain amino acids. Catalyzes the dehydration of (2R,3R)-2,3-dihydroxy-3-methylpentanoate (2,3-dihydroxy-3-methylvalerate) into 2-oxo-3-methylpentanoate (2-oxo-3-methylvalerate) and of (2R)-2,3-dihydroxy-3-methylbutanoate (2,3-dihydroxyisovalerate) into 2-oxo-3-methylbutanoate (2-oxoisovalerate), the penultimate precursor to L-isoleucine and L-valine, respectively. The protein is Dihydroxy-acid dehydratase of Vibrio atlanticus (strain LGP32) (Vibrio splendidus (strain Mel32)).